The chain runs to 291 residues: Beta-lactamase CTX-M-15 (291 aa).

Positions 1-28 (MVKKSLRQFTLMATATVTLLLGSVPLYA) are cleaved as a signal peptide. Ser73 acts as the Nucleophile; acyl-ester intermediate in catalysis. The a beta-lactam site is built by Lys76, Ser133, Glu169, and Ser240.

This sequence belongs to the class-A beta-lactamase family. As to quaternary structure, monomer.

The protein resides in the secreted. The enzyme catalyses a beta-lactam + H2O = a substituted beta-amino acid. With respect to regulation, inhibited by the beta-lactamase-blocking agents clavulanic acid and avibactam, via a covalent binding to Ser-73. Extended-spectrum beta-lactamase (ESBL) which confers resistance to penicillins, as well as first, second, third and fourth-generation cephalosporins. Has cefotaxime- and ceftazidime-hydrolyzing activity. Inactive against the carbapenem antibiotics, imipenem, meropenem and ertapenem. The protein is Beta-lactamase CTX-M-15 of Escherichia coli O25b:H4.